The following is a 310-amino-acid chain: Choline trimethylamine-lyase activating enzyme (310 aa).

The region spanning 17–304 is the Radical SAM core domain; sequence YDGPGVRTLV…EACIRKYDFP (288 aa). 7 residues coordinate [4Fe-4S] cluster: Cys31, Cys35, Cys38, Cys57, Cys60, Cys63, and Cys99. Residue 37-39 participates in S-adenosyl-L-methionine binding; that stretch reads WCS. 4Fe-4S ferredoxin-type domains follow at residues 48 to 77 and 79 to 109; these read YQVL…ISAS and LRHG…VVGE. Residues Gly139, 188–190, and His264 contribute to the S-adenosyl-L-methionine site; that span reads DVK.

This sequence belongs to the organic radical-activating enzymes family. As to quaternary structure, monomer. [4Fe-4S] cluster is required as a cofactor.

It carries out the reaction glycyl-[protein] + reduced [flavodoxin] + S-adenosyl-L-methionine = glycin-2-yl radical-[protein] + semiquinone [flavodoxin] + 5'-deoxyadenosine + L-methionine + H(+). Its pathway is amine and polyamine metabolism; choline degradation. In terms of biological role, catalyzes activation of the choline trimethylamine-lyase CutC under anaerobic conditions by generation of an organic free radical on a glycine residue, via a homolytic cleavage of S-adenosyl-L-methionine (SAM). Is involved in the anaerobic choline utilization pathway that allows D.alaskensis to grow on choline as a source of carbon and energy. This chain is Choline trimethylamine-lyase activating enzyme, found in Oleidesulfovibrio alaskensis (strain ATCC BAA-1058 / DSM 17464 / G20) (Desulfovibrio alaskensis).